The chain runs to 214 residues: Dephospho-CoA kinase (214 aa).

The DPCK domain maps to 3–202; the sequence is KIGLTGGIGS…DRWLALAGAA (200 aa). 11 to 16 is an ATP binding site; that stretch reads GSGKSR.

Belongs to the CoaE family.

The protein localises to the cytoplasm. The catalysed reaction is 3'-dephospho-CoA + ATP = ADP + CoA + H(+). Its pathway is cofactor biosynthesis; coenzyme A biosynthesis; CoA from (R)-pantothenate: step 5/5. Catalyzes the phosphorylation of the 3'-hydroxyl group of dephosphocoenzyme A to form coenzyme A. The chain is Dephospho-CoA kinase from Bordetella bronchiseptica (strain ATCC BAA-588 / NCTC 13252 / RB50) (Alcaligenes bronchisepticus).